Reading from the N-terminus, the 203-residue chain is Outer-membrane lipoprotein LolB (203 aa).

Positions 1–17 (MNRLFRLLPLASLVLTA) are cleaved as a signal peptide. Cysteine 18 is lipidated: N-palmitoyl cysteine. A lipid anchor (S-diacylglycerol cysteine) is attached at cysteine 18.

It belongs to the LolB family. Monomer.

Its subcellular location is the cell outer membrane. Its function is as follows. Plays a critical role in the incorporation of lipoproteins in the outer membrane after they are released by the LolA protein. This chain is Outer-membrane lipoprotein LolB, found in Klebsiella pneumoniae subsp. pneumoniae (strain ATCC 700721 / MGH 78578).